Reading from the N-terminus, the 142-residue chain is Sec-independent protein translocase protein TatB (142 aa).

Residues 2–22 (FANVGWGEMLVLVIAGLVILG) form a helical membrane-spanning segment. The tract at residues 89 to 142 (DDSIFTGKFDQNGKSEKPEQKPEKPQSAPGPAAAVPDQPAGGRSGSTPYDTDAT) is disordered. Residues 99–112 (QNGKSEKPEQKPEK) show a composition bias toward basic and acidic residues. The segment covering 133-142 (GSTPYDTDAT) has biased composition (polar residues).

Belongs to the TatB family. The Tat system comprises two distinct complexes: a TatABC complex, containing multiple copies of TatA, TatB and TatC subunits, and a separate TatA complex, containing only TatA subunits. Substrates initially bind to the TatABC complex, which probably triggers association of the separate TatA complex to form the active translocon.

It localises to the cell membrane. Part of the twin-arginine translocation (Tat) system that transports large folded proteins containing a characteristic twin-arginine motif in their signal peptide across membranes. Together with TatC, TatB is part of a receptor directly interacting with Tat signal peptides. TatB may form an oligomeric binding site that transiently accommodates folded Tat precursor proteins before their translocation. The sequence is that of Sec-independent protein translocase protein TatB from Mycolicibacterium vanbaalenii (strain DSM 7251 / JCM 13017 / BCRC 16820 / KCTC 9966 / NRRL B-24157 / PYR-1) (Mycobacterium vanbaalenii).